The chain runs to 567 residues: D-lactate dehydrogenase [cytochrome], mitochondrial (567 aa).

Residues 1 to 56 (MAFASKFARSKTILSFLRPCRQLHSTPKSTGDVTVLSPVKGRRRLPTCWSSSLFPL) constitute a mitochondrion transit peptide. An FAD-binding PCMH-type domain is found at 142–319 (AVNIPDVVVF…TEITLRLQKI (178 aa)).

Belongs to the FAD-binding oxidoreductase/transferase type 4 family. In terms of assembly, homodimer. Requires FAD as cofactor. Expressed in leaves, stems, flowers and roots.

The protein resides in the mitochondrion. The enzyme catalyses (R)-lactate + 2 Fe(III)-[cytochrome c] = 2 Fe(II)-[cytochrome c] + pyruvate + 2 H(+). Inhibited by cyanide ions. Its function is as follows. Catalyzes the stereospecific oxidation of D-lactate to pyruvate. Involved in the detoxification of methylglyoxal and D-lactate, but probably not involved in the metabolization of glycolate. In Arabidopsis thaliana (Mouse-ear cress), this protein is D-lactate dehydrogenase [cytochrome], mitochondrial.